Here is a 442-residue protein sequence, read N- to C-terminus: tRNA modification GTPase MnmE (442 aa).

Residues Arg-27, Glu-84, and Lys-124 each coordinate (6S)-5-formyl-5,6,7,8-tetrahydrofolate. Residues 221 to 366 (GLHVVIVGAP…LLDALQAFAE (146 aa)) form the TrmE-type G domain. GTP is bound by residues 231-236 (NAGKSS), 250-256 (SKEAGTT), and 275-278 (DTAG). Residues Ser-235 and Thr-256 each contribute to the Mg(2+) site. Lys-442 is a binding site for (6S)-5-formyl-5,6,7,8-tetrahydrofolate.

This sequence belongs to the TRAFAC class TrmE-Era-EngA-EngB-Septin-like GTPase superfamily. TrmE GTPase family. In terms of assembly, homodimer. Heterotetramer of two MnmE and two MnmG subunits. It depends on K(+) as a cofactor.

The protein localises to the cytoplasm. In terms of biological role, exhibits a very high intrinsic GTPase hydrolysis rate. Involved in the addition of a carboxymethylaminomethyl (cmnm) group at the wobble position (U34) of certain tRNAs, forming tRNA-cmnm(5)s(2)U34. This Brucella canis (strain ATCC 23365 / NCTC 10854 / RM-666) protein is tRNA modification GTPase MnmE.